The chain runs to 135 residues: ATP synthase epsilon chain (135 aa).

The protein belongs to the ATPase epsilon chain family. In terms of assembly, F-type ATPases have 2 components, CF(1) - the catalytic core - and CF(0) - the membrane proton channel. CF(1) has five subunits: alpha(3), beta(3), gamma(1), delta(1), epsilon(1). CF(0) has three main subunits: a, b and c.

Its subcellular location is the cell inner membrane. In terms of biological role, produces ATP from ADP in the presence of a proton gradient across the membrane. The sequence is that of ATP synthase epsilon chain from Rhizobium rhizogenes (strain K84 / ATCC BAA-868) (Agrobacterium radiobacter).